We begin with the raw amino-acid sequence, 217 residues long: Phosphoribosylformylglycinamidine synthase subunit PurQ (217 aa).

A Glutamine amidotransferase type-1 domain is found at 2 to 217 (SIGVLVFPGS…GRVLLQGLLS (216 aa)). The active-site Nucleophile is Cys86. Catalysis depends on residues His194 and Glu196.

As to quaternary structure, part of the FGAM synthase complex composed of 1 PurL, 1 PurQ and 2 PurS subunits.

It is found in the cytoplasm. The enzyme catalyses N(2)-formyl-N(1)-(5-phospho-beta-D-ribosyl)glycinamide + L-glutamine + ATP + H2O = 2-formamido-N(1)-(5-O-phospho-beta-D-ribosyl)acetamidine + L-glutamate + ADP + phosphate + H(+). It carries out the reaction L-glutamine + H2O = L-glutamate + NH4(+). The protein operates within purine metabolism; IMP biosynthesis via de novo pathway; 5-amino-1-(5-phospho-D-ribosyl)imidazole from N(2)-formyl-N(1)-(5-phospho-D-ribosyl)glycinamide: step 1/2. In terms of biological role, part of the phosphoribosylformylglycinamidine synthase complex involved in the purines biosynthetic pathway. Catalyzes the ATP-dependent conversion of formylglycinamide ribonucleotide (FGAR) and glutamine to yield formylglycinamidine ribonucleotide (FGAM) and glutamate. The FGAM synthase complex is composed of three subunits. PurQ produces an ammonia molecule by converting glutamine to glutamate. PurL transfers the ammonia molecule to FGAR to form FGAM in an ATP-dependent manner. PurS interacts with PurQ and PurL and is thought to assist in the transfer of the ammonia molecule from PurQ to PurL. This chain is Phosphoribosylformylglycinamidine synthase subunit PurQ, found in Parasynechococcus marenigrum (strain WH8102).